Reading from the N-terminus, the 306-residue chain is uncharacterized protein (306 aa).

8 consecutive transmembrane segments (helical) span residues 7-27, 30-50, 68-88, 95-115, 144-164, 194-214, 232-252, and 274-294; these read LESW…GYLA, VGII…FMAL, LFIT…LFAL, ADHV…TLFI, AIGV…LMSF, IGAI…VLSV, IAIM…GLIF, and TIPF…NVAP.

The protein localises to the cell membrane. This is an uncharacterized protein from Mycoplasma genitalium (strain ATCC 33530 / DSM 19775 / NCTC 10195 / G37) (Mycoplasmoides genitalium).